Reading from the N-terminus, the 495-residue chain is MDNKVSILNQPKPFKMIFFIELWERFGYYGLQGILAVYFVDKLGFSMQDSFVTFGAFAALVYGLVSVGGYVGDYVLGTKRTMVFGAVVLALGYFLMGFSILNPNFIYVALGAIAVGNGLFKANPSSLLAKCYEKGDSRLDGAFTLYYMSINIGSLVSLSISPVIANNYGYEYAFIICGLGLIASLFSYFSLRSTVQGIGSEPDALPLNKTKALIVLIGTIASTLVCAWLLQNIMMANLALGLIGVGVVGFFLKETFKEVGEQRNKMIVAFILMLQAIIFYVLYAQMPTSLNFFAINNVHSELFGMDINPVSLQALNPFWVIFCSPILAYLYTYYGNQNKDLSMPGKFTVGMFMCAFGFLSVAAAGNWFADQAGMVSVWWMVLVYLFQSLGELMISGLGLAMVASLVPQRLMGFTMGAWFLTQAASFIIGGYVATFSATPEHLTDPLDTLPVYTELFQNIGFVTLAVAIVMAITAPKLNKMMTSSQPEDAELVEQP.

The Cytoplasmic portion of the chain corresponds to 1-16 (MDNKVSILNQPKPFKM). Residues 17-37 (IFFIELWERFGYYGLQGILAV) traverse the membrane as a helical segment. The Periplasmic portion of the chain corresponds to 38 to 50 (YFVDKLGFSMQDS). A helical transmembrane segment spans residues 51–71 (FVTFGAFAALVYGLVSVGGYV). Residues 72 to 80 (GDYVLGTKR) lie on the Cytoplasmic side of the membrane. The helical transmembrane segment at 81-101 (TMVFGAVVLALGYFLMGFSIL) threads the bilayer. Topologically, residues 102–104 (NPN) are periplasmic. A helical transmembrane segment spans residues 105–125 (FIYVALGAIAVGNGLFKANPS). The Cytoplasmic segment spans residues 126–144 (SLLAKCYEKGDSRLDGAFT). The chain crosses the membrane as a helical span at residues 145-165 (LYYMSINIGSLVSLSISPVIA). At 166–170 (NNYGY) the chain is on the periplasmic side. The helical transmembrane segment at 171–191 (EYAFIICGLGLIASLFSYFSL) threads the bilayer. Residues 192 to 209 (RSTVQGIGSEPDALPLNK) are Cytoplasmic-facing. The chain crosses the membrane as a helical span at residues 210–230 (TKALIVLIGTIASTLVCAWLL). Position 231 (Gln231) is a topological domain, periplasmic. The chain crosses the membrane as a helical span at residues 232–252 (NIMMANLALGLIGVGVVGFFL). The Cytoplasmic segment spans residues 253–265 (KETFKEVGEQRNK). Residues 266 to 286 (MIVAFILMLQAIIFYVLYAQM) form a helical membrane-spanning segment. Residues 287 to 309 (PTSLNFFAINNVHSELFGMDINP) are Periplasmic-facing. The chain crosses the membrane as a helical span at residues 310 to 330 (VSLQALNPFWVIFCSPILAYL). Topologically, residues 331–348 (YTYYGNQNKDLSMPGKFT) are cytoplasmic. A helical membrane pass occupies residues 349 to 369 (VGMFMCAFGFLSVAAAGNWFA). Topologically, residues 370-373 (DQAG) are periplasmic. A helical transmembrane segment spans residues 374 to 394 (MVSVWWMVLVYLFQSLGELMI). At 395–409 (SGLGLAMVASLVPQR) the chain is on the cytoplasmic side. Residues 410–430 (LMGFTMGAWFLTQAASFIIGG) traverse the membrane as a helical segment. Residues 431 to 454 (YVATFSATPEHLTDPLDTLPVYTE) lie on the Periplasmic side of the membrane. A helical transmembrane segment spans residues 455–475 (LFQNIGFVTLAVAIVMAITAP). At 476–495 (KLNKMMTSSQPEDAELVEQP) the chain is on the cytoplasmic side.

It belongs to the major facilitator superfamily. Proton-dependent oligopeptide transporter (POT/PTR) (TC 2.A.17) family. DtpB subfamily.

It localises to the cell inner membrane. Functionally, proton-dependent permease that transports di- and tripeptides. The protein is Dipeptide and tripeptide permease B of Aliivibrio fischeri (strain MJ11) (Vibrio fischeri).